Consider the following 146-residue polypeptide: D-aminoacyl-tRNA deacylase (146 aa).

The Gly-cisPro motif, important for rejection of L-amino acids motif lies at glycine 137–proline 138.

Belongs to the DTD family. As to quaternary structure, homodimer.

The protein resides in the cytoplasm. The catalysed reaction is glycyl-tRNA(Ala) + H2O = tRNA(Ala) + glycine + H(+). The enzyme catalyses a D-aminoacyl-tRNA + H2O = a tRNA + a D-alpha-amino acid + H(+). In terms of biological role, an aminoacyl-tRNA editing enzyme that deacylates mischarged D-aminoacyl-tRNAs. Also deacylates mischarged glycyl-tRNA(Ala), protecting cells against glycine mischarging by AlaRS. Acts via tRNA-based rather than protein-based catalysis; rejects L-amino acids rather than detecting D-amino acids in the active site. By recycling D-aminoacyl-tRNA to D-amino acids and free tRNA molecules, this enzyme counteracts the toxicity associated with the formation of D-aminoacyl-tRNA entities in vivo and helps enforce protein L-homochirality. The sequence is that of D-aminoacyl-tRNA deacylase from Bacillus mycoides (strain KBAB4) (Bacillus weihenstephanensis).